Consider the following 115-residue polypeptide: MKFVLLFGVLLVTLFSYSSAEMLDDFDQADEDELLSLIEKEEARAKECTPRFYDCSHDRHSCCRSELFKDVCTCFYPEGGDNEVCTCQQPKHLKYMEKAAGEAKKFGGKIKKWFG.

The signal sequence occupies residues 1–20; sequence MKFVLLFGVLLVTLFSYSSA. Residues 21-44 constitute a propeptide that is removed on maturation; the sequence is EMLDDFDQADEDELLSLIEKEEAR. 4 disulfides stabilise this stretch: C48/C63, C55/C72, C62/C87, and C74/C85.

Belongs to the neurotoxin 19 (CSTX) family. 01 subfamily. Expressed by the venom gland.

The protein resides in the secreted. The chain is U3-lycotoxin-Ls1n from Lycosa singoriensis (Wolf spider).